The following is a 670-amino-acid chain: Receptor for retinol uptake STRA6 (670 aa).

The Extracellular portion of the chain corresponds to 1-50; sequence MESQASENGSQTSSGVTDDYSSWYIEEPLGAEEVQPEGVIPLCQLTAPPA. N-linked (GlcNAc...) asparagine glycosylation occurs at Asn8. A helical membrane pass occupies residues 51–71; that stretch reads LLHACLASLSFLVLLLLALLV. Residues 72–97 lie on the Cytoplasmic side of the membrane; sequence RRRRLWPRCGHRGLGLPSPVDFLAGD. Residues 98-118 form a helical membrane-spanning segment; that stretch reads LSWTVPAAVFVVLFSNLCLLL. Over 119-144 the chain is Extracellular; that stretch reads PDENPLPFLNLTAASSPDGEMETSRG. Asn128 carries an N-linked (GlcNAc...) asparagine glycan. Residues 145-165 traverse the membrane as a helical segment; the sequence is PWKLLALLYYPALYYPLAACA. The Cytoplasmic segment spans residues 166–168; it reads SAG. The chain crosses the membrane as a helical span at residues 169-189; that stretch reads HQAAFLLGTVLSWAHFGVQVW. Residues 190 to 205 lie on the Extracellular side of the membrane; sequence QKAECPQDPKIYKHYS. A helical transmembrane segment spans residues 206–226; it reads LLASLPLLLGLGFLSLWYPVQ. The Cytoplasmic segment spans residues 227-296; the sequence is LVQSLRHRTG…PQPGFRLPLK (70 aa). The tract at residues 235–294 is interaction with RBP1; that stretch reads TGAGSQGLQTSYSEKYLRTLLCPKKLDSCSHPASKRSLLSRAWAFSHHSIYTPQPGFRLP. A helical transmembrane segment spans residues 297–317; sequence LVISATLTGTATYQVALLLLV. At 318–368 the chain is on the extracellular side; the sequence is SVVPTVQKVRAGINTDVSYLLAGFGIVLSEDRQEVVELVKHHLWTVEACYI. A helical membrane pass occupies residues 369–389; it reads SALVLSCASTFLLLIRSLRTH. Topologically, residues 390–423 are cytoplasmic; that stretch reads RANLQALHRGAALDLDPPLQSIHPSRQAIVSWMS. A helical membrane pass occupies residues 424–444; that stretch reads FCAYQTAFSCLGLLVQQVIFF. Over 445-474 the chain is Extracellular; it reads LGTTSLAFLVFVPLLHGRNLLLLRSLESTW. A helical membrane pass occupies residues 475–495; the sequence is PFWLTVALAVILQNIAANWIF. Over 496 to 510 the chain is Cytoplasmic; that stretch reads LRTHHGYPELTNRRM. Residues 511-548 constitute an intramembrane region (helical); it reads LCVATFLLFPINMLVGAIMAVWRVLISSLYNTVHLGQM. Over 549–670 the chain is Cytoplasmic; that stretch reads DLSLLPQRAA…TSAKANGTQP (122 aa). Tyr644 is modified (phosphotyrosine).

Homodimer. Interacts with JAK2 and STAT5. Interacts (via extracellular domains) with RBP4. Interacts (via cytoplasmic domains) with RBP1. Post-translationally, phosphorylated on tyrosine residues in response to RBP4 binding. Phosphorylation requires the presence of LRAT, suggesting it may be triggered by the uptake of retinol that is then metabolized within the cell to retinoids that function as signaling molecules. Widely expressed in the embryo. Detected in adult in the retinal pigment epithelium in the eye. In the adult, is highly expressed in cells that compose blood-organ barriers in the brain (choroid plexus and the brain microvascular), in testis (the basal layer of the seminiferous epithelium), in the yolk sac, and in the chorioallantoic placenta. Detected in white adipose tissue and skeletal muscle, but not in liver (at protein level). Widely expressed in adult, with high expression levels in the eye. Detected in brain, cerebellum, testis, pituitary, pancreas, kidney, spleen, and female genital tract; and at very low levels in heart and lung. Not detected in liver.

The protein resides in the cell membrane. Its function is as follows. Functions as a retinol transporter. Accepts all-trans retinol from the extracellular retinol-binding protein RBP4, facilitates retinol transport across the cell membrane, and then transfers retinol to the cytoplasmic retinol-binding protein RBP1. Retinol uptake is enhanced by LRAT, an enzyme that converts retinol to all-trans retinyl esters, the storage forms of vitamin A. Contributes to the activation of a signaling cascade that depends on retinol transport and LRAT-dependent generation of retinol metabolites that then trigger activation of JAK2 and its target STAT5, and ultimately increase the expression of SOCS3 and inhibit cellular responses to insulin. Important for the homeostasis of vitamin A and its derivatives, such as retinoic acid and 11-cis-retinal. STRA6-mediated transport is particularly important in the eye, and under conditions of dietary vitamin A deficiency. Does not transport retinoic acid. This chain is Receptor for retinol uptake STRA6 (Stra6), found in Mus musculus (Mouse).